A 160-amino-acid chain; its full sequence is Protein TCP17 (160 aa).

Its subcellular location is the cytoplasm. The protein is Protein TCP17 of Trypanosoma cruzi.